The chain runs to 561 residues: Nucleoprotein (561 aa).

The segment at Met-53–Ile-237 is binding site for the cap structure m7GTP. 2 residues coordinate Mn(2+): Asp-380 and Glu-382. Positions 390, 497, 500, and 521 each coordinate Zn(2+). Residue Asp-525 coordinates Mn(2+).

The protein belongs to the arenaviridae nucleocapsid protein family. As to quaternary structure, homomultimerizes to form the nucleocapsid. Binds to viral genomic RNA. Interacts with glycoprotein G2. Interacts with protein Z; this interaction probably directs the encapsidated genome to budding sites. Interacts with protein L; this interaction does not interfere with Z-L interaction. Interacts with host IKBKE (via Protein kinase domain); the interaction inhibits IKBKE kinase activity.

It is found in the virion. The protein resides in the host cytoplasm. Its function is as follows. Encapsidates the genome, protecting it from nucleases. The encapsidated genomic RNA is termed the nucleocapsid (NC). Serves as template for viral transcription and replication. The increased presence of protein N in host cell does not seem to trigger the switch from transcription to replication as observed in other negative strain RNA viruses. Through the interaction with host IKBKE, strongly inhibits the phosphorylation and nuclear translocation of host IRF3, a protein involved in interferon activation pathway, leading to the inhibition of interferon-beta and IRF3-dependent promoters activation. Also encodes a functional 3'-5' exoribonuclease that degrades preferentially dsRNA substrates and thereby participates in the suppression of interferon induction. This chain is Nucleoprotein, found in Allpahuayo mammarenavirus (isolate Rat/Peru/CLHP-2472/1997) (ALLV).